The primary structure comprises 1413 residues: ABC transporter G family member 33 (1413 aa).

Positions 1 to 10 are enriched in low complexity; the sequence is MGSSFRSSSS. Residues 1–21 form a disordered region; the sequence is MGSSFRSSSSRNEHEDGGDEA. The segment covering 11–21 has biased composition (basic and acidic residues); that stretch reads RNEHEDGGDEA. Residues 140-412 enclose the ABC transporter 1 domain; sequence LKLSGVRTNE…FEECGFQCPE (273 aa). 172-179 lines the ATP pocket; the sequence is GPPGCGKT. The ABC transmembrane type-2 1 domain occupies 490-702; that stretch reads ELFRACISRE…AEIGLSVNEF (213 aa). Helical transmembrane passes span 509–529, 546–566, 580–600, 626–646, 652–672, and 738–758; these read VYLF…TVFI, CLFF…SMTV, FYPA…LSFF, FMIL…IAAI, AAMT…GFAI, and LSAL…ALSF. In terms of domain architecture, ABC transporter 2 spans 813–1065; the sequence is ITFQDLNYYV…CVIEYFQNIP (253 aa). Position 858–865 (858–865) interacts with ATP; it reads GISGAGKT. The 215-residue stretch at 1138–1352 folds into the ABC transmembrane type-2 2 domain; it reads EQFKSCLWKM…TLNLFFSSQY (215 aa). 7 helical membrane passes run 1157–1177, 1189–1209, 1245–1265, 1276–1296, 1302–1322, 1330–1350, and 1385–1405; these read YNLM…LLFW, LFTV…NNCT, IPYI…MIGF, LYAM…LISI, VAAI…GFLI, WWVW…FFSS, and ITAI…AFFV.

The protein belongs to the ABC transporter superfamily. ABCG family. PDR (TC 3.A.1.205) subfamily. In terms of tissue distribution, expressed in roots and stems.

The protein localises to the membrane. Functionally, may be a general defense protein. The sequence is that of ABC transporter G family member 33 (ABCG33) from Arabidopsis thaliana (Mouse-ear cress).